Here is a 336-residue protein sequence, read N- to C-terminus: Aspartate--ammonia ligase (336 aa).

This sequence belongs to the class-II aminoacyl-tRNA synthetase family. AsnA subfamily.

It localises to the cytoplasm. It catalyses the reaction L-aspartate + NH4(+) + ATP = L-asparagine + AMP + diphosphate + H(+). The protein operates within amino-acid biosynthesis; L-asparagine biosynthesis; L-asparagine from L-aspartate (ammonia route): step 1/1. The chain is Aspartate--ammonia ligase from Lactobacillus johnsonii (strain CNCM I-12250 / La1 / NCC 533).